We begin with the raw amino-acid sequence, 311 residues long: Methionyl-tRNA formyltransferase (311 aa).

(6S)-5,6,7,8-tetrahydrofolate is bound at residue 112 to 115; that stretch reads SLLP.

It belongs to the Fmt family.

It carries out the reaction L-methionyl-tRNA(fMet) + (6R)-10-formyltetrahydrofolate = N-formyl-L-methionyl-tRNA(fMet) + (6S)-5,6,7,8-tetrahydrofolate + H(+). In terms of biological role, attaches a formyl group to the free amino group of methionyl-tRNA(fMet). The formyl group appears to play a dual role in the initiator identity of N-formylmethionyl-tRNA by promoting its recognition by IF2 and preventing the misappropriation of this tRNA by the elongation apparatus. The protein is Methionyl-tRNA formyltransferase of Bartonella henselae (strain ATCC 49882 / DSM 28221 / CCUG 30454 / Houston 1) (Rochalimaea henselae).